The following is a 753-amino-acid chain: Polyribonucleotide nucleotidyltransferase (753 aa).

2 residues coordinate Mg(2+): D543 and D549. The KH domain maps to 609–668 (PRITTVKIPVAKIGELIGPKGKNINALTEETGANISIEDDGTVFISAADGASAEAAIEKI). The region spanning 680–749 (GERFLGTVVK…NRGKISLVPV (70 aa)) is the S1 motif domain.

This sequence belongs to the polyribonucleotide nucleotidyltransferase family. It depends on Mg(2+) as a cofactor.

It is found in the cytoplasm. The enzyme catalyses RNA(n+1) + phosphate = RNA(n) + a ribonucleoside 5'-diphosphate. Its function is as follows. Involved in mRNA degradation. Catalyzes the phosphorolysis of single-stranded polyribonucleotides processively in the 3'- to 5'-direction. The chain is Polyribonucleotide nucleotidyltransferase from Corynebacterium glutamicum (strain R).